Here is a 325-residue protein sequence, read N- to C-terminus: Melanocortin receptor 5 (325 aa).

Topologically, residues 1-37 (MNSSFHLHFLDLNLNATEGNLSGPNVKNKSSPCEDMG) are extracellular. Residues Asn2, Asn15, Asn20, and Asn28 are each glycosylated (N-linked (GlcNAc...) asparagine). Residues 38–61 (IAVEVFLTLGVISLLENILVIGAI) traverse the membrane as a helical segment. Topologically, residues 62–73 (VKNKNLHSPMYF) are cytoplasmic. Residues 74 to 97 (FVCSLAVADMLVSMSSAWETITIY) traverse the membrane as a helical segment. The Extracellular portion of the chain corresponds to 98–114 (LLNNKHLVIADAFVRHI). The helical transmembrane segment at 115-138 (DNVFDSMICISVVASMCSLLAIAV) threads the bilayer. The Cytoplasmic portion of the chain corresponds to 139-155 (DRYVTIFYALRYHHIMT). The helical transmembrane segment at 156 to 179 (ARRSGAIIAGIWAFCTGCGIVFIL) threads the bilayer. Topologically, residues 180–186 (YSESTYV) are extracellular. The helical transmembrane segment at 187–211 (ILCLISMFFAMLFLLVSLYIHMFLL) threads the bilayer. The Cytoplasmic portion of the chain corresponds to 212 to 239 (ARTHVKRIAALPRASSARQRTSMQGAVT). The chain crosses the membrane as a helical span at residues 240–265 (VTMLLGVFTVCWAPFFLHLTLMLSCP). At 266-273 (QNLYCSCF) the chain is on the extracellular side. Residues 274–297 (MSHFNMYLILIMCNSVMDPLIYAF) form a helical membrane-spanning segment. The Cytoplasmic segment spans residues 298–325 (RSQEMRKTFKEIICCRGFRIACSFPRRD). 2 S-palmitoyl cysteine lipidation sites follow: Cys311 and Cys312.

This sequence belongs to the G-protein coupled receptor 1 family.

The protein localises to the cell membrane. In terms of biological role, receptor for MSH (alpha, beta and gamma) and ACTH. The activity of this receptor is mediated by G proteins which activate adenylate cyclase. This receptor is a possible mediator of the immunomodulation properties of melanocortins. This chain is Melanocortin receptor 5 (MC5R), found in Pan troglodytes (Chimpanzee).